A 306-amino-acid chain; its full sequence is D-alanine--D-alanine ligase (306 aa).

Positions 102 to 300 constitute an ATP-grasp domain; it reads KIIAASAGVS…YGDIVKWIVE (199 aa). 128–183 provides a ligand contact to ATP; the sequence is PMKPPYVIKPIREGSSFGVVIVGSDETMPLHDIMNNEWVYDDEIMVEKYVPGRELT. Positions 253, 267, and 269 each coordinate Mg(2+).

The protein belongs to the D-alanine--D-alanine ligase family. Mg(2+) serves as cofactor. Requires Mn(2+) as cofactor.

The protein resides in the cytoplasm. The catalysed reaction is 2 D-alanine + ATP = D-alanyl-D-alanine + ADP + phosphate + H(+). The protein operates within cell wall biogenesis; peptidoglycan biosynthesis. In terms of biological role, cell wall formation. The sequence is that of D-alanine--D-alanine ligase from Bartonella bacilliformis (strain ATCC 35685 / KC583 / Herrer 020/F12,63).